A 309-amino-acid chain; its full sequence is Fe-S cluster assembly protein dre2 (309 aa).

The N-terminal SAM-like domain stretch occupies residues 1–132 (MTTTIVLASP…LRRPAQVEAV (132 aa)). The tract at residues 133–195 (PLKLSTKKSA…DALVSDEETQ (63 aa)) is linker. Residues C207, C216, C219, and C221 each coordinate [2Fe-2S] cluster. The tract at residues 207–221 (CSKPGKKKRCKNCTC) is fe-S binding site A. C265, C268, C276, and C279 together coordinate [4Fe-4S] cluster. 2 short sequence motifs (cx2C motif) span residues 265-268 (CGSC) and 276-279 (CSGC). The tract at residues 265–279 (CGSCYLGDAFRCSGC) is fe-S binding site B.

This sequence belongs to the anamorsin family. In terms of assembly, monomer. Interacts with TAH18. Interacts with MIA40. It depends on [2Fe-2S] cluster as a cofactor. The cofactor is [4Fe-4S] cluster.

The protein resides in the cytoplasm. The protein localises to the mitochondrion intermembrane space. In terms of biological role, component of the cytosolic iron-sulfur (Fe-S) protein assembly (CIA) machinery required for the maturation of extramitochondrial Fe-S proteins. Part of an electron transfer chain functioning in an early step of cytosolic Fe-S biogenesis, facilitating the de novo assembly of a [4Fe-4S] cluster on the scaffold complex CFD1-NBP35. Electrons are transferred to DRE2 from NADPH via the FAD- and FMN-containing protein TAH18. TAH18-DRE2 are also required for the assembly of the diferric tyrosyl radical cofactor of ribonucleotide reductase (RNR), probably by providing electrons for reduction during radical cofactor maturation in the catalytic small subunit RNR2. The polypeptide is Fe-S cluster assembly protein dre2 (Schizosaccharomyces japonicus (strain yFS275 / FY16936) (Fission yeast)).